The sequence spans 505 residues: Flagellin (505 aa).

It belongs to the bacterial flagellin family.

The protein localises to the secreted. Its subcellular location is the bacterial flagellum. In terms of biological role, flagellin is the subunit protein which polymerizes to form the filaments of bacterial flagella. The protein is Flagellin (fliC) of Salmonella dublin.